The sequence spans 316 residues: Methionyl-tRNA formyltransferase (316 aa).

112-115 (SLLP) is a binding site for (6S)-5,6,7,8-tetrahydrofolate.

This sequence belongs to the Fmt family.

The catalysed reaction is L-methionyl-tRNA(fMet) + (6R)-10-formyltetrahydrofolate = N-formyl-L-methionyl-tRNA(fMet) + (6S)-5,6,7,8-tetrahydrofolate + H(+). In terms of biological role, attaches a formyl group to the free amino group of methionyl-tRNA(fMet). The formyl group appears to play a dual role in the initiator identity of N-formylmethionyl-tRNA by promoting its recognition by IF2 and preventing the misappropriation of this tRNA by the elongation apparatus. The chain is Methionyl-tRNA formyltransferase from Glaesserella parasuis serovar 5 (strain SH0165) (Haemophilus parasuis).